The chain runs to 484 residues: Cobyric acid synthase (484 aa).

Positions 251 to 438 (ALKVAVPVLS…LHGLFGSDPY (188 aa)) constitute a GATase cobBQ-type domain. Cys-333 functions as the Nucleophile in the catalytic mechanism. The active site involves His-430.

Belongs to the CobB/CobQ family. CobQ subfamily.

It participates in cofactor biosynthesis; adenosylcobalamin biosynthesis. Functionally, catalyzes amidations at positions B, D, E, and G on adenosylcobyrinic A,C-diamide. NH(2) groups are provided by glutamine, and one molecule of ATP is hydrogenolyzed for each amidation. This Sinorhizobium medicae (strain WSM419) (Ensifer medicae) protein is Cobyric acid synthase.